The chain runs to 325 residues: Dehydrogenase/reductase SDR family member 7B (325 aa).

Residues 1-17 (MISPSSRKGMLKERAMD) are Cytoplasmic-facing. A helical; Signal-anchor for type II membrane protein membrane pass occupies residues 18 to 38 (LVTQTTILPLLFGCLGIFSLF). Residues 39–325 (RLLQRTRSKA…ARKERKSKNS (287 aa)) lie on the Lumenal side of the membrane. Residues Ser-62 and Leu-64 each contribute to the NAD(+) site. Residue Ser-194 coordinates substrate. Tyr-207, Lys-211, and Thr-242 together coordinate NAD(+). The Proton acceptor role is filled by Tyr-207.

The protein belongs to the short-chain dehydrogenases/reductases (SDR) family.

It is found in the endoplasmic reticulum membrane. In terms of biological role, putative oxidoreductase. The sequence is that of Dehydrogenase/reductase SDR family member 7B (Dhrs7b) from Rattus norvegicus (Rat).